The following is a 497-amino-acid chain: Guanosine-5'-triphosphate,3'-diphosphate pyrophosphatase (497 aa).

It belongs to the GppA/Ppx family. GppA subfamily.

It carries out the reaction guanosine 3'-diphosphate 5'-triphosphate + H2O = guanosine 3',5'-bis(diphosphate) + phosphate + H(+). Its pathway is purine metabolism; ppGpp biosynthesis; ppGpp from GTP: step 2/2. Functionally, catalyzes the conversion of pppGpp to ppGpp. Guanosine pentaphosphate (pppGpp) is a cytoplasmic signaling molecule which together with ppGpp controls the 'stringent response', an adaptive process that allows bacteria to respond to amino acid starvation, resulting in the coordinated regulation of numerous cellular activities. This is Guanosine-5'-triphosphate,3'-diphosphate pyrophosphatase from Vibrio parahaemolyticus serotype O3:K6 (strain RIMD 2210633).